Here is a 91-residue protein sequence, read N- to C-terminus: Potassium channel toxin MeuTXK-beta-1 (91 aa).

An N-terminal signal peptide occupies residues 1 to 19 (MQRNLVVLLFLGMVALSSC). The BetaSPN-type CS-alpha/beta domain maps to 54–91 (QFGCPAYQGYCDDHCQDIEKKEGFCHGFKCKCGIPMGF). Cystine bridges form between cysteine 57-cysteine 78, cysteine 64-cysteine 83, and cysteine 68-cysteine 85.

As to expression, expressed by the venom gland.

Its subcellular location is the secreted. Its function is as follows. Has a low affinity binding to potassium channels of rat brain synaptosomes. Displays weak antibacterial activity against Stenotrophomonas sp. Strongly inhibits the development of the Plasmodium berghei ookinetes. Displays slight hemolytic effect on mouse erythrocytes. Induces cytolysis on Xenopus oocytes at high concentrations. Is not toxic towards mice and towards the insect Tenebrio molitor. The polypeptide is Potassium channel toxin MeuTXK-beta-1 (Mesobuthus eupeus (Lesser Asian scorpion)).